The primary structure comprises 164 residues: UPF0114 protein YqhA (164 aa).

3 helical membrane passes run 15–35 (LLAP…LKFF), 53–73 (LILV…LVMV), and 136–156 (LMWY…MGYL).

The protein belongs to the UPF0114 family.

The protein localises to the cell membrane. The polypeptide is UPF0114 protein YqhA (Salmonella agona (strain SL483)).